A 610-amino-acid polypeptide reads, in one-letter code: Dopamine beta-hydroxylase (610 aa).

Residues 1 to 9 (MQVPSPSVR) are Cytoplasmic-facing. Residues 10-30 (EAASMYGTAVAVFLVILVAAL) traverse the membrane as a helical; Signal-anchor for type II membrane protein segment. Residues 31 to 610 (QGSAPAESPF…TVLNISGGKG (580 aa)) lie on the Intragranular side of the membrane. One can recognise a DOMON domain in the interval 50–166 (GTLELSWNIS…GTVHLVYGFL (117 aa)). Disulfide bonds link C147-C589, C225-C276, C262-C288, C383-C496, C387-C558, and C459-C481. Residue N177 is glycosylated (N-linked (GlcNAc...) asparagine). Residue Y223 is part of the active site. Cu(2+)-binding residues include H255 and H256. The Cu(2+) site is built by H326, H405, H407, and M480. H405 is a catalytic residue. N559 carries N-linked (GlcNAc...) asparagine glycosylation. Residues 585 to 610 (PTPHCPASQAQSPAGPTVLNISGGKG) are disordered.

The protein belongs to the copper type II ascorbate-dependent monooxygenase family. Homotetramer; composed of two disulfide-linked dimers. Cu(2+) serves as cofactor. Proteolytic cleavage after the membrane-anchor leads to the release of the soluble form. Post-translationally, N-glycosylated. In terms of tissue distribution, detected in chromaffin granules in the adrenal medulla (at protein level). Detected in adrenal medulla.

It localises to the cytoplasmic vesicle. It is found in the secretory vesicle lumen. Its subcellular location is the secretory vesicle. The protein resides in the chromaffin granule lumen. The protein localises to the secretory vesicle membrane. It localises to the chromaffin granule membrane. The enzyme catalyses dopamine + 2 L-ascorbate + O2 = (R)-noradrenaline + 2 monodehydro-L-ascorbate radical + H2O. The protein operates within catecholamine biosynthesis; (R)-noradrenaline biosynthesis; (R)-noradrenaline from dopamine: step 1/1. In terms of biological role, catalyzes the hydroxylation of dopamine to noradrenaline (also known as norepinephrine), and is thus vital for regulation of these neurotransmitters. The chain is Dopamine beta-hydroxylase (DBH) from Bos taurus (Bovine).